Here is a 218-residue protein sequence, read N- to C-terminus: Ribose-5-phosphate isomerase A (218 aa).

Substrate-binding positions include 28–31, 81–84, and 94–97; these read TGST, DGAD, and KGGG. E103 functions as the Proton acceptor in the catalytic mechanism. Substrate is bound at residue K121.

Belongs to the ribose 5-phosphate isomerase family. Homodimer.

It carries out the reaction aldehydo-D-ribose 5-phosphate = D-ribulose 5-phosphate. The protein operates within carbohydrate degradation; pentose phosphate pathway; D-ribose 5-phosphate from D-ribulose 5-phosphate (non-oxidative stage): step 1/1. Catalyzes the reversible conversion of ribose-5-phosphate to ribulose 5-phosphate. This is Ribose-5-phosphate isomerase A from Shewanella woodyi (strain ATCC 51908 / MS32).